The chain runs to 735 residues: Ion-translocating oxidoreductase complex subunit C (735 aa).

4Fe-4S ferredoxin-type domains follow at residues 368 to 397 (MGAP…QQLY) and 407 to 436 (KATA…VQYF). [4Fe-4S] cluster-binding residues include Cys-377, Cys-380, Cys-383, Cys-387, Cys-416, Cys-419, Cys-422, and Cys-426. Residues 534-716 (QARAKQAAHP…ADPRKAAVAA (183 aa)) are disordered.

Belongs to the 4Fe4S bacterial-type ferredoxin family. RnfC subfamily. The complex is composed of six subunits: RsxA, RsxB, RsxC, RsxD, RsxE and RsxG. It depends on [4Fe-4S] cluster as a cofactor.

Its subcellular location is the cell inner membrane. Its function is as follows. Part of a membrane-bound complex that couples electron transfer with translocation of ions across the membrane. Required to maintain the reduced state of SoxR. This Salmonella agona (strain SL483) protein is Ion-translocating oxidoreductase complex subunit C.